A 430-amino-acid polypeptide reads, in one-letter code: Adenylosuccinate synthetase (430 aa).

Residues Gly11–Lys17 and Gly39–Ser41 contribute to the GTP site. The Proton acceptor role is filled by Asp12. Residues Asp12 and Gly39 each coordinate Mg(2+). IMP contacts are provided by residues Asp12–Lys15, Asn37–His40, Thr129, Arg143, Asn221, Thr236, and Arg300. The active-site Proton donor is His40. Val296–Arg302 provides a ligand contact to substrate. GTP-binding positions include Arg302, Lys328–Asp330, and Gly412–Gly414.

The protein belongs to the adenylosuccinate synthetase family. Homodimer. It depends on Mg(2+) as a cofactor.

The protein localises to the cytoplasm. It carries out the reaction IMP + L-aspartate + GTP = N(6)-(1,2-dicarboxyethyl)-AMP + GDP + phosphate + 2 H(+). The protein operates within purine metabolism; AMP biosynthesis via de novo pathway; AMP from IMP: step 1/2. Plays an important role in the de novo pathway and in the salvage pathway of purine nucleotide biosynthesis. Catalyzes the first committed step in the biosynthesis of AMP from IMP. This Neurospora crassa (strain ATCC 24698 / 74-OR23-1A / CBS 708.71 / DSM 1257 / FGSC 987) protein is Adenylosuccinate synthetase.